We begin with the raw amino-acid sequence, 510 residues long: tRNA-2-methylthio-N(6)-dimethylallyladenosine synthase (510 aa).

The disordered stretch occupies residues methionine 1–glycine 25. One can recognise an MTTase N-terminal domain in the interval arginine 34 to histidine 154. 6 residues coordinate [4Fe-4S] cluster: cysteine 43, cysteine 79, cysteine 117, cysteine 195, cysteine 199, and cysteine 202. One can recognise a Radical SAM core domain in the interval alanine 181–alanine 414. Residues lysine 417–alanine 479 enclose the TRAM domain. Over residues glutamine 484 to alanine 493 the composition is skewed to polar residues. A disordered region spans residues glutamine 484–valine 510.

This sequence belongs to the methylthiotransferase family. MiaB subfamily. Monomer. The cofactor is [4Fe-4S] cluster.

The protein localises to the cytoplasm. The enzyme catalyses N(6)-dimethylallyladenosine(37) in tRNA + (sulfur carrier)-SH + AH2 + 2 S-adenosyl-L-methionine = 2-methylsulfanyl-N(6)-dimethylallyladenosine(37) in tRNA + (sulfur carrier)-H + 5'-deoxyadenosine + L-methionine + A + S-adenosyl-L-homocysteine + 2 H(+). Its function is as follows. Catalyzes the methylthiolation of N6-(dimethylallyl)adenosine (i(6)A), leading to the formation of 2-methylthio-N6-(dimethylallyl)adenosine (ms(2)i(6)A) at position 37 in tRNAs that read codons beginning with uridine. The protein is tRNA-2-methylthio-N(6)-dimethylallyladenosine synthase of Beijerinckia indica subsp. indica (strain ATCC 9039 / DSM 1715 / NCIMB 8712).